The following is an 88-amino-acid chain: Cell division topological specificity factor (88 aa).

It belongs to the MinE family.

Functionally, prevents the cell division inhibition by proteins MinC and MinD at internal division sites while permitting inhibition at polar sites. This ensures cell division at the proper site by restricting the formation of a division septum at the midpoint of the long axis of the cell. The protein is Cell division topological specificity factor of Shewanella denitrificans (strain OS217 / ATCC BAA-1090 / DSM 15013).